Consider the following 264-residue polypeptide: Expansin-B3 (264 aa).

Residues 1–25 (MQLFPVMLATLCIVLQLLIGSSALA) form the signal peptide. Residues 54–162 (GGACGYGTLV…RRTACKYRGK (109 aa)) form the Expansin-like EG45 domain. Disulfide bonds link Cys-57/Cys-86, Cys-89/Cys-157, and Cys-94/Cys-100. One can recognise an Expansin-like CBD domain in the interval 175–256 (FWLSLLVEFE…NWAPKATYSS (82 aa)).

Belongs to the expansin family. Expansin B subfamily.

It localises to the secreted. It is found in the cell wall. The protein resides in the membrane. Functionally, may cause loosening and extension of plant cell walls by disrupting non-covalent bonding between cellulose microfibrils and matrix glucans. No enzymatic activity has been found. This chain is Expansin-B3 (EXPB3), found in Arabidopsis thaliana (Mouse-ear cress).